The sequence spans 228 residues: Prepilin leader peptidase/N-methyltransferase (228 aa).

6 consecutive transmembrane segments (helical) span residues 18–38 (LWGSFLFLSGLAFGSFFNVVI), 95–115 (RYPLMELATGALFVLAGYLMA), 116–136 (PGVPLLGGLILLSLLLILAAI), 147–167 (LTLPLMWAGLLFNLSATYVPL), 168–188 (AEAVVGAMAGYLSLWSVYWVF), and 204–224 (LLAALGAWLGWQALPQTLLLA).

Belongs to the peptidase A24 family.

Its subcellular location is the cell inner membrane. It catalyses the reaction Typically cleaves a -Gly-|-Phe- bond to release an N-terminal, basic peptide of 5-8 residues from type IV prepilin, and then N-methylates the new N-terminal amino group, the methyl donor being S-adenosyl-L-methionine.. Functionally, plays an essential role in type IV pili and type II pseudopili formation by proteolytically removing the leader sequence from substrate proteins and subsequently monomethylating the alpha-amino group of the newly exposed N-terminal phenylalanine. The chain is Prepilin leader peptidase/N-methyltransferase (pulO) from Klebsiella pneumoniae.